Consider the following 142-residue polypeptide: Struthiocalcin-2 (142 aa).

3 disulfides stabilise this stretch: Cys6/Cys17, Cys34/Cys138, and Cys113/Cys130. Residues Phe13–Glu139 enclose the C-type lectin domain. Phosphoserine is present on residues Ser62, Ser66, and Ser68.

It is found in the secreted. Its subcellular location is the extracellular space. It localises to the extracellular matrix. The protein is Struthiocalcin-2 of Struthio camelus (Common ostrich).